The chain runs to 79 residues: Sec-independent protein translocase protein TatA (79 aa).

Residues 1–21 traverse the membrane as a helical segment; that stretch reads MFSGISIWQLLILLAIVVLLF. Basic and acidic residues-rich tracts occupy residues 44 to 58 and 66 to 79; these read MKDG…RLAD and QDAE…KDKA. Positions 44 to 79 are disordered; it reads MKDGEDEQDHKRLADDDQPQNKQDAEQKAEQEKDKA.

This sequence belongs to the TatA/E family. As to quaternary structure, the Tat system comprises two distinct complexes: a TatABC complex, containing multiple copies of TatA, TatB and TatC subunits, and a separate TatA complex, containing only TatA subunits. Substrates initially bind to the TatABC complex, which probably triggers association of the separate TatA complex to form the active translocon.

The protein localises to the cell inner membrane. Functionally, part of the twin-arginine translocation (Tat) system that transports large folded proteins containing a characteristic twin-arginine motif in their signal peptide across membranes. TatA could form the protein-conducting channel of the Tat system. This Alcanivorax borkumensis (strain ATCC 700651 / DSM 11573 / NCIMB 13689 / SK2) protein is Sec-independent protein translocase protein TatA.